Reading from the N-terminus, the 404-residue chain is 4-hydroxy-3-methylbut-2-en-1-yl diphosphate synthase (ferredoxin) (404 aa).

[4Fe-4S] cluster contacts are provided by C313, C316, C347, and E354.

Belongs to the IspG family. The cofactor is [4Fe-4S] cluster.

The catalysed reaction is (2E)-4-hydroxy-3-methylbut-2-enyl diphosphate + 2 oxidized [2Fe-2S]-[ferredoxin] + H2O = 2-C-methyl-D-erythritol 2,4-cyclic diphosphate + 2 reduced [2Fe-2S]-[ferredoxin] + H(+). Its pathway is isoprenoid biosynthesis; isopentenyl diphosphate biosynthesis via DXP pathway; isopentenyl diphosphate from 1-deoxy-D-xylulose 5-phosphate: step 5/6. Converts 2C-methyl-D-erythritol 2,4-cyclodiphosphate (ME-2,4cPP) into 1-hydroxy-2-methyl-2-(E)-butenyl 4-diphosphate. This Crocosphaera subtropica (strain ATCC 51142 / BH68) (Cyanothece sp. (strain ATCC 51142)) protein is 4-hydroxy-3-methylbut-2-en-1-yl diphosphate synthase (ferredoxin).